The chain runs to 506 residues: Dual specificity protein kinase shkC (506 aa).

The disordered stretch occupies residues 1 to 21; it reads MDSGLGSSYPEERSGPPEIRP. Basic and acidic residues predominate over residues 10–21; sequence PEERSGPPEIRP. The 261-residue stretch at 24–284 folds into the Protein kinase domain; that stretch reads INFEELIGTG…IISALDHVII (261 aa). Residues 30–38 and K51 each bind ATP; that span reads IGTGSFGKV. The active-site Proton acceptor is D147. The region spanning 396–488 is the SH2 domain; the sequence is WFHGDLDTTE…KLDSQLGVPN (93 aa).

Belongs to the protein kinase superfamily. TKL Ser/Thr protein kinase family. SH2 domain-containing protein kinase subfamily.

The protein resides in the membrane. The catalysed reaction is L-seryl-[protein] + ATP = O-phospho-L-seryl-[protein] + ADP + H(+). The enzyme catalyses L-threonyl-[protein] + ATP = O-phospho-L-threonyl-[protein] + ADP + H(+). In terms of biological role, required for proper chemotaxis and phagocytosis; proper spatiotemporal control of F-actin levels in chemotaxing cells. Negative regulator of the PI3K (phosphatidylinositol 3 kinase) pathway. Predominantly phosphorylates serines and threonines and tyrosines at a lower level. This chain is Dual specificity protein kinase shkC (shkC), found in Dictyostelium discoideum (Social amoeba).